Reading from the N-terminus, the 93-residue chain is UPF0457 protein GTNG_2792 (93 aa).

It belongs to the UPF0457 family.

In Geobacillus thermodenitrificans (strain NG80-2), this protein is UPF0457 protein GTNG_2792.